Consider the following 213-residue polypeptide: Golgi apparatus membrane protein TVP23 homolog A (213 aa).

Transmembrane regions (helical) follow at residues Pro-32 to Cys-52, Trp-54 to Phe-74, Ile-123 to Leu-143, and Trp-150 to Leu-170.

It belongs to the TVP23 family.

The protein localises to the membrane. The sequence is that of Golgi apparatus membrane protein TVP23 homolog A (TVP23A) from Homo sapiens (Human).